Consider the following 95-residue polypeptide: Pancreatic polypeptide prohormone (95 aa).

An N-terminal signal peptide occupies residues 1 to 29 (MAAARLCLSLLLLSTCVALLLQPLLGAQG). Residue tyrosine 65 is modified to Tyrosine amide. A propeptide spanning residues 89–95 (ELSPLDL) is cleaved from the precursor.

It belongs to the NPY family.

The protein localises to the secreted. Functionally, hormone secreted by pancreatic cells that acts as a regulator of pancreatic and gastrointestinal functions probably by signaling through the G protein-coupled receptor NPY4R2. In Homo sapiens (Human), this protein is Pancreatic polypeptide prohormone.